Here is a 148-residue protein sequence, read N- to C-terminus: Ubiquitin conjugating enzyme E2 B (148 aa).

The UBC core domain occupies 2-148; it reads AAHKRLQKEI…AKEWTKKYAK (147 aa). The active-site Glycyl thioester intermediate is C87.

Belongs to the ubiquitin-conjugating enzyme family. Interacts with mkkA (via F-box/WD40 repeat domains).

It catalyses the reaction S-ubiquitinyl-[E1 ubiquitin-activating enzyme]-L-cysteine + [E2 ubiquitin-conjugating enzyme]-L-cysteine = [E1 ubiquitin-activating enzyme]-L-cysteine + S-ubiquitinyl-[E2 ubiquitin-conjugating enzyme]-L-cysteine.. It functions in the pathway protein modification; protein ubiquitination. Its function is as follows. Involved in protein ubiquitination and degradation during development. Mediates protein ubiquitination at the mound and finger stage required for subsequent development and may be an essential component of the developmental transition between the induction of postaggregative gene expression and subsequent cell-type differentiation and morphogenesis. ubcB and ubpB differentially control ubiquitination/deubiquitination and degradation of mkkA protein in a cell-type-specific and temporally regulated manner. This chain is Ubiquitin conjugating enzyme E2 B (ubcB), found in Dictyostelium discoideum (Social amoeba).